The following is a 779-amino-acid chain: MENFFIVKKLASATYGKALNVDLNKLLQALNHHSLQGLISYCSALTILHYDYSTLAARLSVYLLHQSTASSFSKAVSLQAAQSCSRLSSHFVDVVYKYKAIFDSYIDYSRDYKLSLLGIETMKNSYLLKNKDGVIMERPQDAYMRVAIMIHGMGRVVNMKMILLTYDLLSRHVITHASPTMFNAGTKKPQLSSCFLLNVNDNLENLYDMVKTAGIISGGGGGIGLCLSGIRAKNSFISGSGLRSNGIQNYIVLQNASQCYANQGGLRPGAYAVYLELWHQDIFTFLQMPRLKGQMAEQRLNAPNLKYGLWVPDLFMEILEDQIHNRGDGTWYLFSPDQAPNLHKVFDLERSQHENAHREFKKLYYQYVAEKRYTGVTTAKEIIKEWFKTVVQVGNPYIGFKDAINRKSNLSHVGTITNSNLCIEITIPCWEGNEAEQGVCNLAAVNLAAFIRESSYDYRGLIEAAGNVTENLDNIIDNGYYPTEATRRSNMRHRPIGIGVFGLADVFASLKMKFGSPEAIAIDEAIHAALYYGAMRRSIELAKEKGSHPSFPGSAASKGLLQPDLWVRCGDLIPSWENRVAQTTQGVLTPKKWWQLRLAAIQGVRNGYLTALMPTATSSNSTGKNECFEPFTSNLYTRRTLSGEFIILNKYLMDDLEEINLWSEDIQQQLLNAGGSIQHILDIPAEIRERYKTSREMNQKILTKHAAARNPFVSQSMSLNYYFYEPELSQVLTVLVLGWKKGLTTGSYYCHFSPGAGTQKKIIRNSEKACNADCEACLL.

Substrate-binding positions include S178, 193 to 194, G222, 420 to 424, and 614 to 618; these read SC, NLCIE, and PTATS. A disulfide bridge links C194 with C440. The active-site Proton acceptor is the N420. C422 serves as the catalytic Cysteine radical intermediate. E424 (proton acceptor) is an active-site residue.

Belongs to the ribonucleoside diphosphate reductase large chain family. In terms of assembly, heterotetramer composed of a homodimer of the large subunit (R1) and a homodimer of the small subunit (R2). Larger multisubunit protein complex are also active, composed of (R1)n(R2)n.

The enzyme catalyses a 2'-deoxyribonucleoside 5'-diphosphate + [thioredoxin]-disulfide + H2O = a ribonucleoside 5'-diphosphate + [thioredoxin]-dithiol. Under complex allosteric control mediated by deoxynucleoside triphosphates and ATP binding. The type of nucleotide bound at the specificity site determines substrate preference. It seems probable that ATP makes the enzyme reduce CDP and UDP, dGTP favors ADP reduction and dTTP favors GDP reduction. In terms of biological role, ribonucleoside-diphosphate reductase holoenzyme provides the precursors necessary for viral DNA synthesis. Allows virus growth in non-dividing cells. Catalyzes the biosynthesis of deoxyribonucleotides from the corresponding ribonucleotides. The polypeptide is Ribonucleoside-diphosphate reductase large subunit (African swine fever virus (isolate Tick/Malawi/Lil 20-1/1983) (ASFV)).